Consider the following 150-residue polypeptide: Large ribosomal subunit protein bL9 (150 aa).

It belongs to the bacterial ribosomal protein bL9 family.

Binds to the 23S rRNA. This Streptococcus equi subsp. zooepidemicus (strain MGCS10565) protein is Large ribosomal subunit protein bL9.